The sequence spans 92 residues: Signal recognition particle 19 kDa protein (92 aa).

The protein belongs to the SRP19 family. Part of the signal recognition particle protein translocation system, which is composed of SRP and FtsY. Archaeal SRP consists of a 7S RNA molecule of 300 nucleotides and two protein subunits: SRP54 and SRP19.

Its subcellular location is the cytoplasm. Its function is as follows. Involved in targeting and insertion of nascent membrane proteins into the cytoplasmic membrane. Binds directly to 7S RNA and mediates binding of the 54 kDa subunit of the SRP. In Halorubrum lacusprofundi (strain ATCC 49239 / DSM 5036 / JCM 8891 / ACAM 34), this protein is Signal recognition particle 19 kDa protein.